The chain runs to 396 residues: RNA binding protein fox-1 homolog 1 (396 aa).

The tract at residues 1–119 (MNCEREQLRG…ESKSQPKRLH (119 aa)) is disordered. Residues 67–86 (PPTQTHSEQSADTSAQTVSG) show a composition bias toward polar residues. A compositionally biased stretch (low complexity) spans 87 to 98 (TATQTDDAAPTD). The segment covering 99–112 (GQPQTQPSENTESK) has biased composition (polar residues). The RRM domain maps to 116–192 (KRLHVSNIPF…RKIEVNNATA (77 aa)). Asymmetric dimethylarginine is present on residues arginine 316 and alanine 337. Omega-N-methylarginine is present on arginine 387.

As to quaternary structure, binds to the C-terminus of ATXN2. As to expression, detected in brain (at protein level). Detected in heart, brain, neurons, skeletal muscle and embryo.

It localises to the nucleus. The protein resides in the cytoplasm. Functionally, RNA-binding protein that regulates alternative splicing events by binding to 5'-UGCAUGU-3' elements. Prevents binding of U2AF2 to the 3'-splice site. Regulates alternative splicing of tissue-specific exons and of differentially spliced exons during erythropoiesis. This is RNA binding protein fox-1 homolog 1 (Rbfox1) from Mus musculus (Mouse).